A 387-amino-acid chain; its full sequence is 2-deoxystreptamine glucosyltransferase (387 aa).

It belongs to the glycosyltransferase group 1 family.

The enzyme catalyses 2-deoxystreptamine + UDP-N-acetyl-alpha-D-glucosamine = 2'-N-acetylparomamine + UDP + H(+). The catalysed reaction is 2-deoxystreptamine + UDP-alpha-D-glucose = 2'-deamino-2'-hydroxyparomamine + UDP + H(+). The protein operates within antibiotic biosynthesis; kanamycin biosynthesis. Its function is as follows. Glycosyltransferase involved in the biosynthesis of kanamycin by mediating conversion of 2-deoxystreptamine (2-DOS) to 2'-N-acetylparomamine using UDP-alpha-D-glucose as sugar donor. Can also accept UDP-alpha-D-glucosamine, but with a much lower activity compared to UDP-alpha-D-glucose. The polypeptide is 2-deoxystreptamine glucosyltransferase (kanF) (Streptomyces kanamyceticus).